Consider the following 280-residue polypeptide: 2,3,4,5-tetrahydropyridine-2,6-dicarboxylate N-succinyltransferase (280 aa).

Belongs to the transferase hexapeptide repeat family.

It localises to the cytoplasm. The catalysed reaction is (S)-2,3,4,5-tetrahydrodipicolinate + succinyl-CoA + H2O = (S)-2-succinylamino-6-oxoheptanedioate + CoA. It functions in the pathway amino-acid biosynthesis; L-lysine biosynthesis via DAP pathway; LL-2,6-diaminopimelate from (S)-tetrahydrodipicolinate (succinylase route): step 1/3. In Methylorubrum populi (strain ATCC BAA-705 / NCIMB 13946 / BJ001) (Methylobacterium populi), this protein is 2,3,4,5-tetrahydropyridine-2,6-dicarboxylate N-succinyltransferase.